The following is a 370-amino-acid chain: S-adenosylmethionine decarboxylase proenzyme (370 aa).

Residue Phe28 participates in substrate binding. Active-site residues include Glu29 and Glu32. Glu85 provides a ligand contact to substrate. Ser86 (schiff-base intermediate with substrate; via pyruvic acid) is an active-site residue. Ser86 bears the Pyruvic acid (Ser); by autocatalysis mark. Cys100 serves as the catalytic Proton donor; for catalytic activity. Active-site proton acceptor; for processing activity residues include Ser249 and His262. Glu266 contacts substrate.

This sequence belongs to the eukaryotic AdoMetDC family. In terms of assembly, forms a heterodimer with catalytically inactive AdoMetDC prozyme; heterodimerization is required to activate AdoMetDC. Requires pyruvate as cofactor. In terms of processing, is synthesized initially as an inactive proenzyme. Formation of the active enzyme involves a self-maturation process in which the active site pyruvoyl group is generated from an internal serine residue via an autocatalytic post-translational modification. Two non-identical subunits are generated from the proenzyme in this reaction, and the pyruvate is formed at the N-terminus of the alpha chain, which is derived from the carboxyl end of the proenzyme. The post-translation cleavage follows an unusual pathway, termed non-hydrolytic serinolysis, in which the side chain hydroxyl group of the serine supplies its oxygen atom to form the C-terminus of the beta chain, while the remainder of the serine residue undergoes an oxidative deamination to produce ammonia and the pyruvoyl group blocking the N-terminus of the alpha chain.

The enzyme catalyses S-adenosyl-L-methionine + H(+) = S-adenosyl 3-(methylsulfanyl)propylamine + CO2. The protein operates within amine and polyamine biosynthesis; S-adenosylmethioninamine biosynthesis; S-adenosylmethioninamine from S-adenosyl-L-methionine: step 1/1. With respect to regulation, allosterically activated by AdoMetDC prozyme. Activated by putrescine and to a lesser extent by spermidine, norspermidine and spermine. Inhibited by 5'-([(Z)-4-amino-2-butenyl]methylamino)-5'-deoxyadenosine (MDL 73811). Its function is as follows. In association with the catalytically inactive AdoMetDC prozyme, catalyzes the decarboxylation of S-adenosyl-L-methionine which is essential for the biosynthesis of the polyamine spermidine. Required for growth and survival during the bloodstream life cycle stage. The polypeptide is S-adenosylmethionine decarboxylase proenzyme (Trypanosoma brucei brucei).